The primary structure comprises 312 residues: Peptide methionine sulfoxide reductase MsrA/MsrB 1 (312 aa).

The interval 1–155 (MAEIYLAGGC…PSGYCHIDVT (155 aa)) is peptide methionine sulfoxide reductase. Cys10 is an active-site residue. One can recognise a MsrB domain in the interval 172 to 295 (QEVLKASLSE…NSASLRFVAK (124 aa)). Catalysis depends on Cys284, which acts as the Nucleophile.

This sequence in the N-terminal section; belongs to the MsrA Met sulfoxide reductase family. It in the C-terminal section; belongs to the MsrB Met sulfoxide reductase family.

The protein resides in the cell membrane. The catalysed reaction is L-methionyl-[protein] + [thioredoxin]-disulfide + H2O = L-methionyl-(S)-S-oxide-[protein] + [thioredoxin]-dithiol. It carries out the reaction [thioredoxin]-disulfide + L-methionine + H2O = L-methionine (S)-S-oxide + [thioredoxin]-dithiol. The enzyme catalyses L-methionyl-[protein] + [thioredoxin]-disulfide + H2O = L-methionyl-(R)-S-oxide-[protein] + [thioredoxin]-dithiol. Has an important function as a repair enzyme for proteins that have been inactivated by oxidation. Catalyzes the reversible oxidation-reduction of methionine sulfoxide in proteins to methionine. The polypeptide is Peptide methionine sulfoxide reductase MsrA/MsrB 1 (msrAB1) (Streptococcus pneumoniae serotype 4 (strain ATCC BAA-334 / TIGR4)).